The chain runs to 237 residues: Ribosomal RNA small subunit methyltransferase G (237 aa).

S-adenosyl-L-methionine-binding positions include Gly78, Phe83, Ala129–Glu130, and Arg148. A disordered region spans residues Lys218–Leu237.

It belongs to the methyltransferase superfamily. RNA methyltransferase RsmG family.

It is found in the cytoplasm. Functionally, specifically methylates the N7 position of a guanine in 16S rRNA. The polypeptide is Ribosomal RNA small subunit methyltransferase G (Streptococcus sanguinis (strain SK36)).